Consider the following 324-residue polypeptide: Galactosylgalactosylxylosylprotein 3-beta-glucuronosyltransferase 2 (324 aa).

At 1 to 2 the chain is on the cytoplasmic side; sequence MK. A helical; Signal-anchor for type II membrane protein transmembrane segment spans residues 3-23; it reads SALCSRFFILLPWILIVIIML. Residues 24-324 are Lumenal-facing; sequence DVDPRRPAPQ…YHLDTVNIEV (301 aa). The interval 50 to 78 is disordered; it reads SRVPLRRSSPGRDAAEKRNESRPQLQPEP. Asn-68 carries an N-linked (GlcNAc...) asparagine glycan. UDP-alpha-D-glucuronate-binding positions include 88–90, Asp-119, Arg-156, Arg-161, and 186–188; these read PTY and DDD. Residue Asp-188 coordinates Mn(2+). The tract at residues 235–244 is interaction with galactose moiety of substrate glycoprotein; sequence WREDRPFAID. Glu-274 functions as the Proton donor/acceptor in the catalytic mechanism. Asn-293 carries N-linked (GlcNAc...) asparagine glycosylation. 301–303 contacts UDP-alpha-D-glucuronate; that stretch reads HTR.

This sequence belongs to the glycosyltransferase 43 family. Homodimer. Mn(2+) serves as cofactor. In terms of tissue distribution, expressed in brain, but not in liver and kidney.

It localises to the golgi apparatus membrane. The enzyme catalyses 3-O-(beta-D-galactosyl-(1-&gt;3)-beta-D-galactosyl-(1-&gt;4)-beta-D-xylosyl)-L-seryl-[protein] + UDP-alpha-D-glucuronate = 3-O-(beta-D-GlcA-(1-&gt;3)-beta-D-Gal-(1-&gt;3)-beta-D-Gal-(1-&gt;4)-beta-D-Xyl)-L-seryl-[protein] + UDP + H(+). Its pathway is protein modification; protein glycosylation. Its function is as follows. Involved in the biosynthesis of L2/HNK-1 carbohydrate epitope on both glycolipids and glycoproteins. This chain is Galactosylgalactosylxylosylprotein 3-beta-glucuronosyltransferase 2 (B3gat2), found in Mus musculus (Mouse).